The chain runs to 459 residues: Biphenyl dioxygenase subunit alpha (459 aa).

The Rieske domain occupies tryptophan 58 to alanine 156. Cysteine 100, histidine 102, cysteine 120, and histidine 123 together coordinate [2Fe-2S] cluster. 2 residues coordinate Fe cation: histidine 233 and histidine 239.

This sequence belongs to the bacterial ring-hydroxylating dioxygenase alpha subunit family. As to quaternary structure, heterohexamer consisting of three BphA subunits and three BphE subunits. A ferredoxin (BphF) and a ferredoxin reductase (BphG) must be present to obtain activity. It depends on [2Fe-2S] cluster as a cofactor. The cofactor is Fe cation.

It catalyses the reaction biphenyl + NADH + O2 + H(+) = (2R,3S)-3-phenylcyclohexa-3,5-diene-1,2-diol + NAD(+). It participates in xenobiotic degradation; biphenyl degradation; 2-hydroxy-2,4-pentadienoate and benzoate from biphenyl: step 1/4. The protein is Biphenyl dioxygenase subunit alpha (bphA) of Paraburkholderia xenovorans (strain LB400).